The chain runs to 355 residues: Zinc finger protein CONSTANS-LIKE 1 (355 aa).

Zn(2+)-binding residues include cysteine 12, cysteine 15, cysteine 35, histidine 40, cysteine 55, cysteine 58, cysteine 78, and histidine 83. The B box-type 1; atypical zinc-finger motif lies at 12–54 (CDTCRSAACTVYCRADSAYLCSSCDAQVHAANRLASRHERVRV). The segment at 55 to 97 (CQSCERAPAAFFCKADAASLCTTCDSEIHSANPLARRHQRVPI) adopts a B box-type 2; atypical zinc-finger fold. Over residues 252–264 (ESTTSDATVSNPR) the composition is skewed to polar residues. The tract at residues 252–281 (ESTTSDATVSNPRSPKAVTDQPPYPPAQML) is disordered. The region spanning 286 to 328 (REARVLRYREKKKMRKFEKTIRYASRKAYAEKRPRIKGRFAKK) is the CCT domain.

It belongs to the CONSTANS family. Highly expressed in leaves and at lower levels in stems, flowers and siliques. Not detected in roots.

The protein localises to the nucleus. Putative transcription factor that may be involved in the light input to the circadian clock but does not affect flowering time. The protein is Zinc finger protein CONSTANS-LIKE 1 (COL1) of Arabidopsis thaliana (Mouse-ear cress).